The chain runs to 245 residues: Purine nucleoside phosphorylase (245 aa).

An a purine D-ribonucleoside-binding site is contributed by histidine 8. Phosphate contacts are provided by residues 24–28 (GDPGR), arginine 46, and 89–92 (RAGS). 184–185 (ME) provides a ligand contact to a purine D-ribonucleoside. Residue aspartate 207 is the Proton donor of the active site.

This sequence belongs to the PNP/MTAP phosphorylase family. Homohexamer; trimer of homodimers.

It catalyses the reaction inosine + phosphate = alpha-D-ribose 1-phosphate + hypoxanthine. The enzyme catalyses guanosine + phosphate = alpha-D-ribose 1-phosphate + guanine. It carries out the reaction 2'-deoxyguanosine + phosphate = 2-deoxy-alpha-D-ribose 1-phosphate + guanine. The catalysed reaction is 2'-deoxyinosine + phosphate = 2-deoxy-alpha-D-ribose 1-phosphate + hypoxanthine. It participates in purine metabolism; purine nucleoside salvage. Its function is as follows. As part of the purine salvage pathway, catalyzes the phosphorolytic breakdown of the N-glycosidic bond in the beta-(deoxy)ribonucleoside molecules, with the formation of the corresponding free purine bases and pentose-1-phosphate. Preferentially acts on inosine and guanosine, and to a lesser extent on 2'-deoxyinosine and 2'-deoxyguanosine. The polypeptide is Purine nucleoside phosphorylase (Plasmodium vivax (strain Salvador I)).